The chain runs to 581 residues: Urease subunit alpha (581 aa).

The Urease domain occupies 134-581 (GGFDSHIHFI…LPMTQRYFLF (448 aa)). 3 residues coordinate Ni(2+): His139, His141, and Lys222. Lys222 bears the N6-carboxylysine mark. His224 contacts substrate. Positions 251 and 277 each coordinate Ni(2+). The active-site Proton donor is the His325. Asp365 contacts Ni(2+).

This sequence belongs to the metallo-dependent hydrolases superfamily. Urease alpha subunit family. Heterotrimer of UreA (gamma), UreB (beta) and UreC (alpha) subunits. Three heterotrimers associate to form the active enzyme. It depends on Ni cation as a cofactor. Carboxylation allows a single lysine to coordinate two nickel ions.

The protein localises to the cytoplasm. It catalyses the reaction urea + 2 H2O + H(+) = hydrogencarbonate + 2 NH4(+). The protein operates within nitrogen metabolism; urea degradation; CO(2) and NH(3) from urea (urease route): step 1/1. The sequence is that of Urease subunit alpha from Albidiferax ferrireducens (strain ATCC BAA-621 / DSM 15236 / T118) (Rhodoferax ferrireducens).